Here is a 469-residue protein sequence, read N- to C-terminus: Sulfate adenylyltransferase subunit 1 (469 aa).

Positions 22 to 237 (KEVLRFITCG…LEEVPVKSEE (216 aa)) constitute a tr-type G domain. Positions 31–38 (GSVDDGKS) are G1. Position 31-38 (31-38 (GSVDDGKS)) interacts with GTP. Residues 89–93 (GITID) form a G2 region. The tract at residues 110-113 (DTPG) is G3. GTP-binding positions include 110 to 114 (DTPGH) and 165 to 168 (NKMD). The G4 stretch occupies residues 165-168 (NKMD). Residues 202–204 (SAK) are G5.

Belongs to the TRAFAC class translation factor GTPase superfamily. Classic translation factor GTPase family. CysN/NodQ subfamily. As to quaternary structure, heterodimer composed of CysD, the smaller subunit, and CysN.

It catalyses the reaction sulfate + ATP + H(+) = adenosine 5'-phosphosulfate + diphosphate. It functions in the pathway sulfur metabolism; hydrogen sulfide biosynthesis; sulfite from sulfate: step 1/3. Functionally, with CysD forms the ATP sulfurylase (ATPS) that catalyzes the adenylation of sulfate producing adenosine 5'-phosphosulfate (APS) and diphosphate, the first enzymatic step in sulfur assimilation pathway. APS synthesis involves the formation of a high-energy phosphoric-sulfuric acid anhydride bond driven by GTP hydrolysis by CysN coupled to ATP hydrolysis by CysD. This chain is Sulfate adenylyltransferase subunit 1, found in Methylorubrum extorquens (strain PA1) (Methylobacterium extorquens).